We begin with the raw amino-acid sequence, 118 residues long: Thioredoxin H-type (118 aa).

One can recognise a Thioredoxin domain in the interval 2–114 (AAEEGQVIGC…LQQTIAKHMA (113 aa)). Catalysis depends on nucleophile residues Cys-40 and Cys-43. An intrachain disulfide couples Cys-40 to Cys-43.

The protein belongs to the thioredoxin family. Plant H-type subfamily.

It is found in the cytoplasm. In terms of biological role, participates in various redox reactions through the reversible oxidation of the active center dithiol to a disulfide. The H form is known to activate a number of cytosolic enzymes. The polypeptide is Thioredoxin H-type (Ricinus communis (Castor bean)).